Reading from the N-terminus, the 155-residue chain is Fibroblast growth factor 2 (155 aa).

Residues 1-9 (MAAGSITTL) constitute a propeptide that is removed on maturation. The segment at 1-20 (MAAGSITTLPALPEDGGSGA) is disordered. N36 contacts heparin. The Cell attachment site; atypical motif lies at 46 to 48 (DGR). Y82 bears the Phosphotyrosine; by TEC mark. Positions 88–90 (DGR) match the Cell attachment site; atypical motif. K95 participates in a covalent cross-link: Glycyl lysine isopeptide (Lys-Gly) (interchain with G-Cter in SUMO1). The segment at 128–144 (KRTGQYKLGPKTGPGQK) is heparin-binding.

Belongs to the heparin-binding growth factors family. In terms of assembly, monomer. Homodimer. Interacts with FGFR1, FGFR2, FGFR3 and FGFR4. Affinity between fibroblast growth factors (FGFs) and their receptors is increased by heparan sulfate glycosaminoglycans that function as coreceptors. Interacts with CSPG4, FGFBP1 and TEC. Found in a complex with FGFBP1, FGF1 and FGF2. Interacts with FGFBP3. Interacts with integrin ITGAV:ITGB3; the interaction is required for FGF2 signaling. Interacts with SNORC (via the extracellular domain). Interacts with glypican GPC3. Phosphorylation at Tyr-82 regulates FGF2 unconventional secretion.

It localises to the secreted. The protein resides in the nucleus. Its function is as follows. Acts as a ligand for FGFR1, FGFR2, FGFR3 and FGFR4. Also acts as an integrin ligand which is required for FGF2 signaling. Binds to integrin ITGAV:ITGB3. Plays an important role in the regulation of cell survival, cell division, cell differentiation and cell migration. Functions as a potent mitogen in vitro. Can induce angiogenesis. Mediates phosphorylation of ERK1/2 and thereby promotes retinal lens fiber differentiation. This Bos taurus (Bovine) protein is Fibroblast growth factor 2 (FGF2).